The primary structure comprises 329 residues: Mitochondrial substrate carrier family protein W (329 aa).

Residues 1–39 (MTTNNSNDNNKRYGIIKQQLQQQQQQHHQQHEQHSRLVE) lie on the Mitochondrial intermembrane side of the membrane. Solcar repeat units lie at residues 34–119 (HSRL…CKEL), 133–221 (ESPL…FKSI), and 231–321 (LGIV…IKKF). Residues 40–60 (MTAGCGAGFMASLFTTPLDVI) form a helical membrane-spanning segment. Residues 61–90 (KTTLQVDNSSNKTIMSTVKSILDRKGGVKN) lie on the Mitochondrial matrix side of the membrane. Residues 91 to 111 (LYLGLKPTLVGQIPSWAVYFS) traverse the membrane as a helical segment. Residues 112–135 (TYTFCKELFTKENDKHSLLEKESP) are Mitochondrial intermembrane-facing. A helical transmembrane segment spans residues 136 to 156 (LIFMTSAIIAGAATSICTSPI). The Mitochondrial matrix segment spans residues 157-193 (WLIKTRFITQEMVGRQKKYRGIVHSMVSIYHEEGFRG). Residues 194–214 (LYKGLGPSLLGVLHVGVQFPL) traverse the membrane as a helical segment. The Mitochondrial intermembrane portion of the chain corresponds to 215-230 (YEKFKSILKEKNKNKE). A helical transmembrane segment spans residues 231-251 (LGIVEIMIASSVSKIIASVVA). The Mitochondrial matrix portion of the chain corresponds to 252-296 (YPHEVLRARSQDSSPDSPNRTYRGNIIQMFKQIVREEGWRGLYRG). Residues 297-315 (MGVNLLRVTPSCVITFTSY) traverse the membrane as a helical segment. The Mitochondrial intermembrane portion of the chain corresponds to 316–329 (EYIKKFLSQNQNHF).

Belongs to the mitochondrial carrier (TC 2.A.29) family.

It localises to the mitochondrion inner membrane. In terms of biological role, mitochondrial solute carriers shuttle metabolites, nucleotides, and cofactors through the mitochondrial inner membrane. The protein is Mitochondrial substrate carrier family protein W (mcfW) of Dictyostelium discoideum (Social amoeba).